Here is a 269-residue protein sequence, read N- to C-terminus: Formamidopyrimidine-DNA glycosylase (269 aa).

Pro2 acts as the Schiff-base intermediate with DNA in catalysis. The active-site Proton donor is Glu3. Catalysis depends on Lys57, which acts as the Proton donor; for beta-elimination activity. The DNA site is built by His90, Arg109, and Lys150. The FPG-type zinc finger occupies 235-269 (QVYGRKGEPCRVCGTPIVATKHAQRATFYCRQCQK). Arg259 acts as the Proton donor; for delta-elimination activity in catalysis.

The protein belongs to the FPG family. As to quaternary structure, monomer. It depends on Zn(2+) as a cofactor.

It carries out the reaction Hydrolysis of DNA containing ring-opened 7-methylguanine residues, releasing 2,6-diamino-4-hydroxy-5-(N-methyl)formamidopyrimidine.. The catalysed reaction is 2'-deoxyribonucleotide-(2'-deoxyribose 5'-phosphate)-2'-deoxyribonucleotide-DNA = a 3'-end 2'-deoxyribonucleotide-(2,3-dehydro-2,3-deoxyribose 5'-phosphate)-DNA + a 5'-end 5'-phospho-2'-deoxyribonucleoside-DNA + H(+). Involved in base excision repair of DNA damaged by oxidation or by mutagenic agents. Acts as a DNA glycosylase that recognizes and removes damaged bases. Has a preference for oxidized purines, such as 7,8-dihydro-8-oxoguanine (8-oxoG). Has AP (apurinic/apyrimidinic) lyase activity and introduces nicks in the DNA strand. Cleaves the DNA backbone by beta-delta elimination to generate a single-strand break at the site of the removed base with both 3'- and 5'-phosphates. This chain is Formamidopyrimidine-DNA glycosylase, found in Escherichia coli (strain K12 / MC4100 / BW2952).